Consider the following 187-residue polypeptide: Acetyl-CoA decarbonylase/synthase complex subunit epsilon (187 aa).

The residue at position 1 (Met-1) is a Blocked amino end (Met).

The protein belongs to the CdhB family. As to quaternary structure, heterotetramer of two alpha and two epsilon subunits. The ACDS complex is made up of alpha, epsilon, beta, gamma and delta subunits with a probable stoichiometry of (alpha(2)epsilon(2))(4)-beta(8)-(gamma(1)delta(1))(8).

Functionally, part of a complex that catalyzes the reversible cleavage of acetyl-CoA, allowing autotrophic growth from CO(2). The alpha-epsilon subcomponent functions as a carbon monoxide dehydrogenase. The precise role of the epsilon subunit is unclear; it may have a stabilizing role within the alpha(2)epsilon(2) component and/or be involved in electron transfer to FAD during a potential FAD-mediated CO oxidation. In Methanothrix soehngenii (Methanosaeta concilii), this protein is Acetyl-CoA decarbonylase/synthase complex subunit epsilon.